The sequence spans 55 residues: Ferredoxin (55 aa).

2 4Fe-4S ferredoxin-type domains span residues 2 to 27 (YFIT…SPGD) and 28 to 55 (SVYV…PQQK). 8 residues coordinate [4Fe-4S] cluster: Cys-8, Cys-11, Cys-14, Cys-18, Cys-37, Cys-40, Cys-43, and Cys-47.

[4Fe-4S] cluster is required as a cofactor.

In terms of biological role, ferredoxins are iron-sulfur proteins that transfer electrons in a wide variety of metabolic reactions. The polypeptide is Ferredoxin (Acetivibrio thermocellus (Hungateiclostridium thermocellum)).